Consider the following 402-residue polypeptide: Multidrug resistance protein MdtH (402 aa).

The next 10 membrane-spanning stretches (helical) occupy residues 13–33 (YFLL…FPLI), 34–54 (SIRF…ALGL), 99–116 (PWIL…GTLF), 139–159 (LLMM…SWLL), 165–185 (YVCW…AWLL), 214–234 (VLTL…LPIM), 244–264 (AVKW…YPIA), 277–297 (LMFG…STTL), 340–360 (LGLA…YDMG), and 368–388 (LPWA…YWQF).

It belongs to the major facilitator superfamily. DHA1 family. MdtH (TC 2.A.1.2.21) subfamily.

Its subcellular location is the cell inner membrane. This Edwardsiella ictaluri (strain 93-146) protein is Multidrug resistance protein MdtH.